A 264-amino-acid chain; its full sequence is tRNA pseudouridine synthase A (264 aa).

The Nucleophile role is filled by Asp51. Residue Tyr109 participates in substrate binding.

It belongs to the tRNA pseudouridine synthase TruA family. In terms of assembly, homodimer.

It carries out the reaction uridine(38/39/40) in tRNA = pseudouridine(38/39/40) in tRNA. Formation of pseudouridine at positions 38, 39 and 40 in the anticodon stem and loop of transfer RNAs. This Yersinia pseudotuberculosis serotype O:1b (strain IP 31758) protein is tRNA pseudouridine synthase A.